Reading from the N-terminus, the 318-residue chain is Transaldolase (318 aa).

Catalysis depends on lysine 132, which acts as the Schiff-base intermediate with substrate.

It belongs to the transaldolase family. Type 1 subfamily. In terms of assembly, homodimer.

The protein resides in the cytoplasm. It catalyses the reaction D-sedoheptulose 7-phosphate + D-glyceraldehyde 3-phosphate = D-erythrose 4-phosphate + beta-D-fructose 6-phosphate. Its pathway is carbohydrate degradation; pentose phosphate pathway; D-glyceraldehyde 3-phosphate and beta-D-fructose 6-phosphate from D-ribose 5-phosphate and D-xylulose 5-phosphate (non-oxidative stage): step 2/3. Functionally, transaldolase is important for the balance of metabolites in the pentose-phosphate pathway. The chain is Transaldolase from Hamiltonella defensa subsp. Acyrthosiphon pisum (strain 5AT).